The primary structure comprises 331 residues: tRNA N6-adenosine threonylcarbamoyltransferase (331 aa).

Fe cation-binding residues include H107 and H111. Residues 129–133, D162, G175, and N269 contribute to the substrate site; that span reads LVSGG. Position 297 (D297) interacts with Fe cation.

Belongs to the KAE1 / TsaD family. It depends on Fe(2+) as a cofactor.

It localises to the cytoplasm. The enzyme catalyses L-threonylcarbamoyladenylate + adenosine(37) in tRNA = N(6)-L-threonylcarbamoyladenosine(37) in tRNA + AMP + H(+). Functionally, required for the formation of a threonylcarbamoyl group on adenosine at position 37 (t(6)A37) in tRNAs that read codons beginning with adenine. Is involved in the transfer of the threonylcarbamoyl moiety of threonylcarbamoyl-AMP (TC-AMP) to the N6 group of A37, together with TsaE and TsaB. TsaD likely plays a direct catalytic role in this reaction. In Wolinella succinogenes (strain ATCC 29543 / DSM 1740 / CCUG 13145 / JCM 31913 / LMG 7466 / NCTC 11488 / FDC 602W) (Vibrio succinogenes), this protein is tRNA N6-adenosine threonylcarbamoyltransferase.